A 300-amino-acid polypeptide reads, in one-letter code: Acetylglutamate kinase (300 aa).

Residues 67 to 68 (GG), Arg-89, and Asn-194 each bind substrate.

It belongs to the acetylglutamate kinase family. ArgB subfamily.

The protein localises to the cytoplasm. The enzyme catalyses N-acetyl-L-glutamate + ATP = N-acetyl-L-glutamyl 5-phosphate + ADP. The protein operates within amino-acid biosynthesis; L-arginine biosynthesis; N(2)-acetyl-L-ornithine from L-glutamate: step 2/4. Functionally, catalyzes the ATP-dependent phosphorylation of N-acetyl-L-glutamate. In Saccharophagus degradans (strain 2-40 / ATCC 43961 / DSM 17024), this protein is Acetylglutamate kinase.